Reading from the N-terminus, the 283-residue chain is Pantothenate synthetase (283 aa).

Methionine 30–histidine 37 provides a ligand contact to ATP. Histidine 37 serves as the catalytic Proton donor. Residue glutamine 61 coordinates (R)-pantoate. A beta-alanine-binding site is contributed by glutamine 61. Residue glycine 149 to aspartate 152 participates in ATP binding. (R)-pantoate is bound at residue glutamine 155. Leucine 186–arginine 189 contacts ATP.

The protein belongs to the pantothenate synthetase family. In terms of assembly, homodimer.

It localises to the cytoplasm. It catalyses the reaction (R)-pantoate + beta-alanine + ATP = (R)-pantothenate + AMP + diphosphate + H(+). Its pathway is cofactor biosynthesis; (R)-pantothenate biosynthesis; (R)-pantothenate from (R)-pantoate and beta-alanine: step 1/1. Its function is as follows. Catalyzes the condensation of pantoate with beta-alanine in an ATP-dependent reaction via a pantoyl-adenylate intermediate. The polypeptide is Pantothenate synthetase (Shigella flexneri serotype 5b (strain 8401)).